Reading from the N-terminus, the 299-residue chain is Homoserine kinase (299 aa).

Position 88–98 (88–98) interacts with ATP; the sequence is PLGRGLGSSAT.

It belongs to the GHMP kinase family. Homoserine kinase subfamily.

It localises to the cytoplasm. The catalysed reaction is L-homoserine + ATP = O-phospho-L-homoserine + ADP + H(+). Its pathway is amino-acid biosynthesis; L-threonine biosynthesis; L-threonine from L-aspartate: step 4/5. Functionally, catalyzes the ATP-dependent phosphorylation of L-homoserine to L-homoserine phosphate. The protein is Homoserine kinase of Gloeobacter violaceus (strain ATCC 29082 / PCC 7421).